The sequence spans 147 residues: Endothelial differentiation-related factor 1 homolog (147 aa).

A disordered region spans residues 1–69; that stretch reads MAESDWDTVT…KLDRETEELH (69 aa). A compositionally biased stretch (basic and acidic residues) spans 33-42; the sequence is RRGEEVETSK. Residues 46–58 show a composition bias toward polar residues; the sequence is AGQNKQHTITRNT. The segment covering 59–69 has biased composition (basic and acidic residues); that stretch reads AKLDRETEELH. An HTH cro/C1-type domain is found at 81-135; that stretch reads IQQGRQGKGMTQKDLATKINEKPQVIADYECGKAIPNNQVMGKIERVIGLKLRGK. The H-T-H motif DNA-binding region spans 92 to 111; that stretch reads QKDLATKINEKPQVIADYEC.

The protein resides in the nucleus. Functionally, probable transcriptional coactivator. The sequence is that of Endothelial differentiation-related factor 1 homolog (edf1) from Xenopus laevis (African clawed frog).